A 24-amino-acid polypeptide reads, in one-letter code: Antimicrobial peptide PGQ (24 aa).

The protein belongs to the gastrin/cholecystokinin family. Magainin subfamily. As to expression, is synthesized in the stomach and stored in a novel granular multinucleated cell in the gastric mucosa. It is stored as active, processed peptides in large granules within the granular gland secretions of the skin.

It localises to the secreted. Antimicrobial peptide. This chain is Antimicrobial peptide PGQ (pgq), found in Xenopus laevis (African clawed frog).